The chain runs to 472 residues: Sodium-coupled neutral amino acid transporter 5 (472 aa).

M1 carries the N-acetylmethionine modification. The Cytoplasmic segment spans residues 1 to 48; that stretch reads MELQDPKMNGALPSDAVGYRQEREGFLPSRGPAPGSKPVQFMDFEGKT. A helical membrane pass occupies residues 49 to 71; it reads SFGMSVFNLSNAIMGSGILGLAY. Topologically, residues 72–87 are extracellular; that stretch reads AMAHTGVIFFLALLLC. A helical membrane pass occupies residues 88 to 108; sequence IALLSSYSIHLLLTCAGIAGI. Over 109–125 the chain is Cytoplasmic; it reads RAYEQLGQRAFGPAGKV. A helical membrane pass occupies residues 126–146; sequence VVATVICLHNVGAMSSYLFII. Residues 147–166 lie on the Extracellular side of the membrane; that stretch reads KSELPLVIGTFLYMDPEGDW. A helical membrane pass occupies residues 167–187; it reads FLKGNLLIIIVSVLIILPLAL. Residues 188–192 are Cytoplasmic-facing; it reads MKHLG. Residues 193–213 traverse the membrane as a helical segment; sequence YLGYTSGLSLTCMLFFLVSVI. Residues 214–257 are Extracellular-facing; that stretch reads YKKFQLGCAIGHNETAMESEALVGLPSQGLNSSCEAQMFTVDSQ. Cysteines 221 and 247 form a disulfide. The N-linked (GlcNAc...) asparagine glycan is linked to N226. Residues 258–278 form a helical membrane-spanning segment; that stretch reads MSYTVPIMAFAFVCHPEVLPI. Residues 279-295 are Cytoplasmic-facing; sequence YTELCRPSKRRMQAVAN. The chain crosses the membrane as a helical span at residues 296-316; it reads VSIGAMFCMYGLTATFGYLTF. The Extracellular segment spans residues 317–334; that stretch reads YSSVKAEMLHMYSQKDPL. The chain crosses the membrane as a helical span at residues 335-355; that stretch reads ILCVRLAVLLAVTLTVPVVLF. Over 356–376 the chain is Cytoplasmic; sequence PIRRALQQLLFPGKAFSWPRH. The chain crosses the membrane as a helical span at residues 377–397; that stretch reads VAIALILLVLVNVLVICVPTI. Topologically, residues 398–399 are extracellular; it reads RD. The chain crosses the membrane as a helical span at residues 400-420; that stretch reads IFGVIGSTSAPSLIFILPSIF. Topologically, residues 421 to 439 are cytoplasmic; it reads YLRIVPSEVEPFLSWPKIQ. Residues 440-460 form a helical membrane-spanning segment; sequence ALCFGVLGVLFMAVSLGFMFA. Residues 461-472 are Extracellular-facing; sequence NWATGQSRMSGH.

It belongs to the amino acid/polyamine transporter 2 family. In terms of tissue distribution, predominantly expressed in stomach, brain, liver, lung and intestinal tract.

The protein localises to the cell membrane. It carries out the reaction L-serine(out) + Na(+)(out) + H(+)(in) = L-serine(in) + Na(+)(in) + H(+)(out). It catalyses the reaction L-alanine(out) + Na(+)(out) + H(+)(in) = L-alanine(in) + Na(+)(in) + H(+)(out). The enzyme catalyses glycine(out) + Na(+)(out) + H(+)(in) = glycine(in) + Na(+)(in) + H(+)(out). The catalysed reaction is L-glutamine(out) + Na(+)(out) + H(+)(in) = L-glutamine(in) + Na(+)(in) + H(+)(out). It carries out the reaction L-asparagine(out) + Na(+)(out) + H(+)(in) = L-asparagine(in) + Na(+)(in) + H(+)(out). It catalyses the reaction L-histidine(out) + Na(+)(out) + H(+)(in) = L-histidine(in) + Na(+)(in) + H(+)(out). The enzyme catalyses L-cysteine(out) + Na(+)(out) + H(+)(in) = L-cysteine(in) + Na(+)(in) + H(+)(out). With respect to regulation, not inhibited by lithium. Partial allosteric regulation on ions sodium binding. Its function is as follows. Symporter that cotransports neutral amino acids and sodium ions, coupled to an H(+) antiporter activity. Releases L-glutamine and glycine from astroglial cells and may participate in the glutamate/GABA-L-glutamine cycle and the NMDA receptors activation. In addition, contributes significantly to L-glutamine uptake in retina, namely in ganglion and Mueller cells therefore, participates in the retinal glutamate-glutamine cycle. The transport activity is pH sensitive and Li(+) tolerant. Moreover functions in both direction and is associated with large uncoupled fluxes of protons. The transport is electroneutral coupled to the cotransport of 1 Na(+) and the antiport of 1 H(+). May have a particular importance for modulation of net hepatic glutamine flux. The chain is Sodium-coupled neutral amino acid transporter 5 (SLC38A5) from Homo sapiens (Human).